A 125-amino-acid polypeptide reads, in one-letter code: UPF0102 protein PSPA7_4996 (125 aa).

This sequence belongs to the UPF0102 family.

In Pseudomonas paraeruginosa (strain DSM 24068 / PA7) (Pseudomonas aeruginosa (strain PA7)), this protein is UPF0102 protein PSPA7_4996.